Here is a 969-residue protein sequence, read N- to C-terminus: Levansucrase (969 aa).

The signal sequence occupies residues 1–52 (MDITVNSQSNTVAPKQAECKKMRYSIRKVATVGATSALVGTLAFLGATQVKA). The span at 89 to 103 (SEAVESSVAHSEVAT) shows a compositional bias: low complexity. The disordered stretch occupies residues 89–169 (SEAVESSVAH…STASSEAADT (81 aa)). Positions 106 to 116 (VTETQPSNTTP) are enriched in polar residues. Residues 124 to 166 (SSTVVTSSSDATTPSATVAAVSAPAHTSEAAVEAPTSTASSEA) show a composition bias toward low complexity. The sucrose site is built by Trp286, Asp287, and Ser356. The Nucleophile role is filled by Asp287. Asp443 lines the Ca(2+) pocket. Sucrose contacts are provided by Arg448 and Asp449. Ca(2+) is bound by residues Gln473, Asn512, and Asp544. Position 545 (Glu545) interacts with sucrose. Glu547 (proton donor/acceptor) is an active-site residue. A sucrose-binding site is contributed by Arg565. Disordered regions lie at residues 746-843 (VKDG…VGDR) and 860-934 (IVAT…SEGS). A compositionally biased stretch (basic and acidic residues) spans 747–758 (KDGKDKKADKPE). Over residues 776–789 (KPGTSKPADNNQPS) the composition is skewed to polar residues. Residues 872-910 (VKEESVTETEAPKPVKSEEKVQSHGVDKANEVTKSDESS) show a composition bias toward basic and acidic residues. Polar residues predominate over residues 924–934 (TPKTPSDSEGS). A helical transmembrane segment spans residues 938 to 958 (ILSILATIFAAIASLALLGYG).

Belongs to the glycosyl hydrolase 68 family.

The protein localises to the cell membrane. It is found in the cell surface. It catalyses the reaction [6)-beta-D-fructofuranosyl-(2-&gt;](n) alpha-D-glucopyranoside + sucrose = [6)-beta-D-fructofuranosyl-(2-&gt;](n+1) alpha-D-glucopyranoside + D-glucose. With respect to regulation, ca(2+) may play an important structural role and promote stability of levansucrase. In terms of biological role, catalyzes the synthesis of levan, a fructose polymer, by transferring the fructosyl moiety from sucrose to a growing acceptor molecule. Also displays sucrose hydrolase activity. The chain is Levansucrase from Streptococcus salivarius.